Consider the following 263-residue polypeptide: Putative replication protein PDa0002 (263 aa).

This chain is Putative replication protein PDa0002, found in Xylella fastidiosa (strain Temecula1 / ATCC 700964).